The primary structure comprises 521 residues: (+)-kolavenyl diphosphate synthase (521 aa).

Residues aspartate 311 and aspartate 313 each coordinate Mg(2+). The DXDD motif signature appears at 311–314 (DGDD).

The protein belongs to the terpene synthase family. It depends on Mg(2+) as a cofactor.

It catalyses the reaction (2E,6E,10E)-geranylgeranyl diphosphate = (+)-kolavenyl diphosphate. Its function is as follows. Involved in the biosynthesis of (+)-O-methylkolavelool. Catalyzes the conversion of geranylgeranyl diphosphate into (+)-kolavenyl diphosphate. The sequence is that of (+)-kolavenyl diphosphate synthase from Herpetosiphon aurantiacus (strain ATCC 23779 / DSM 785 / 114-95).